A 204-amino-acid chain; its full sequence is Protein OPG030 (204 aa).

A BACK domain is found at 95 to 177 (FLRQYINNNI…ITYSELTNAI (83 aa)).

This sequence belongs to the orthopoxvirus OPG030 family.

This Homo sapiens (Human) protein is Protein OPG030 (OPG30).